The sequence spans 1188 residues: Integrin alpha-11 (1188 aa).

An N-terminal signal peptide occupies residues 1-22; that stretch reads MDFPRGLLVAWTLSLWPGFTDT. Residues 23–1141 are Extracellular-facing; sequence FNMDTRNPRV…ISKQEDWQVP (1119 aa). FG-GAP repeat units lie at residues 24–85 and 91–151; these read NMDT…NCTK and VTLS…FSKT. A disulfide bond links Cys-76 and Cys-83. N-linked (GlcNAc...) asparagine glycans are attached at residues Asn-82 and Asn-95. 2 cysteine pairs are disulfide-bonded: Cys-121/Cys-139 and Cys-129/Cys-159. The VWFA domain occupies 164–345; sequence DIVIVLDGSN…AALKDIVDAL (182 aa). Residues Asn-291, Asn-331, Asn-358, Asn-449, and Asn-462 are each glycosylated (N-linked (GlcNAc...) asparagine). FG-GAP repeat units lie at residues 355 to 406, 411 to 461, 462 to 527, 528 to 586, and 590 to 650; these read TNKN…VIPH, LKEF…SMHN, NRSL…RFVY, NGTL…NILK, and QRIT…FEPS. Ca(2+) contacts are provided by Asp-488, Asn-490, Asp-492, and Asp-496. An N-linked (GlcNAc...) asparagine glycan is attached at Asn-528. Positions 551, 553, 555, 559, 613, 615, 617, and 621 each coordinate Ca(2+). Asn-642 carries an N-linked (GlcNAc...) asparagine glycan. Disulfide bonds link Cys-659/Cys-668, Cys-674/Cys-729, and Cys-781/Cys-787. N-linked (GlcNAc...) asparagine glycosylation occurs at Asn-694. Asn-857 carries N-linked (GlcNAc...) asparagine glycosylation. A disulfide bridge connects residues Cys-881 and Cys-893. Residues Asn-894, Asn-973, Asn-1031, Asn-1039, and Asn-1059 are each glycosylated (N-linked (GlcNAc...) asparagine). A helical transmembrane segment spans residues 1142-1164; the sequence is IWIIVGSTLGGLLLLALLVLALW. The Cytoplasmic segment spans residues 1165–1188; it reads KLGFFKSAKRKREPGLGPIPKELK.

This sequence belongs to the integrin alpha chain family. In terms of assembly, heterodimer of an alpha and a beta subunit. Alpha-11 associates with beta-1. Interacts with RAB21.

It localises to the membrane. In terms of biological role, integrin alpha-11/beta-1 is a receptor for collagen. This is Integrin alpha-11 (Itga11) from Mus musculus (Mouse).